The chain runs to 144 residues: Prefoldin subunit alpha (144 aa).

The protein belongs to the prefoldin alpha subunit family. In terms of assembly, heterohexamer of two alpha and four beta subunits.

It localises to the cytoplasm. Functionally, molecular chaperone capable of stabilizing a range of proteins. Seems to fulfill an ATP-independent, HSP70-like function in archaeal de novo protein folding. The sequence is that of Prefoldin subunit alpha from Methanococcus maripaludis (strain C5 / ATCC BAA-1333).